We begin with the raw amino-acid sequence, 181 residues long: Protein GrpE (181 aa).

The protein belongs to the GrpE family. As to quaternary structure, homodimer.

It is found in the cytoplasm. In terms of biological role, participates actively in the response to hyperosmotic and heat shock by preventing the aggregation of stress-denatured proteins, in association with DnaK and GrpE. It is the nucleotide exchange factor for DnaK and may function as a thermosensor. Unfolded proteins bind initially to DnaJ; upon interaction with the DnaJ-bound protein, DnaK hydrolyzes its bound ATP, resulting in the formation of a stable complex. GrpE releases ADP from DnaK; ATP binding to DnaK triggers the release of the substrate protein, thus completing the reaction cycle. Several rounds of ATP-dependent interactions between DnaJ, DnaK and GrpE are required for fully efficient folding. This chain is Protein GrpE, found in Verminephrobacter eiseniae (strain EF01-2).